A 28-amino-acid chain; its full sequence is Cruzioseptin-3 (28 aa).

Glutamine 25 carries the post-translational modification Glutamine amide. Residues 27–28 constitute a propeptide that is removed on maturation; the sequence is EQ.

As to expression, expressed by the skin glands.

The protein localises to the secreted. In terms of biological role, has antimicrobial activity against Gram-negative bacterium E.coli (MIC=13.32 uM), against Gram-positive bacterium S.aureus (MIC=13.32 uM) and against fungus C.albicans (MIC=13.32 uM). At higher concentrations also has a bactericidal and fungicidal effect. Has hemagglutinating activity against horse erythrocytes. The sequence is that of Cruzioseptin-3 from Cruziohyla calcarifer (Splendid leaf frog).